The following is a 124-amino-acid chain: Small ribosomal subunit protein uS12c (124 aa).

Belongs to the universal ribosomal protein uS12 family. Part of the 30S ribosomal subunit.

The protein resides in the plastid. The protein localises to the chloroplast. In terms of biological role, with S4 and S5 plays an important role in translational accuracy. Located at the interface of the 30S and 50S subunits. This is Small ribosomal subunit protein uS12c (rps12) from Cyanidium caldarium (Red alga).